We begin with the raw amino-acid sequence, 258 residues long: Ribosomal RNA small subunit methyltransferase A (258 aa).

Residues H13, L15, G40, E61, D86, and N106 each contribute to the S-adenosyl-L-methionine site.

It belongs to the class I-like SAM-binding methyltransferase superfamily. rRNA adenine N(6)-methyltransferase family. RsmA subfamily.

Its subcellular location is the cytoplasm. It carries out the reaction adenosine(1518)/adenosine(1519) in 16S rRNA + 4 S-adenosyl-L-methionine = N(6)-dimethyladenosine(1518)/N(6)-dimethyladenosine(1519) in 16S rRNA + 4 S-adenosyl-L-homocysteine + 4 H(+). Specifically dimethylates two adjacent adenosines (A1518 and A1519) in the loop of a conserved hairpin near the 3'-end of 16S rRNA in the 30S particle. May play a critical role in biogenesis of 30S subunits. The chain is Ribosomal RNA small subunit methyltransferase A from Coxiella burnetii (strain Dugway 5J108-111).